The primary structure comprises 110 residues: Protein YcgL (110 aa).

The YcgL domain maps to 14–98; that stretch reads MFCVIYRSSK…PPEDLLKQHL (85 aa). Residues 87–110 are disordered; that stretch reads PPPPEDLLKQHLSSVGQNTSSADR. The segment covering 97–110 has biased composition (polar residues); sequence HLSSVGQNTSSADR.

The chain is Protein YcgL from Salmonella newport (strain SL254).